We begin with the raw amino-acid sequence, 112 residues long: CLAVATA3/ESR (CLE)-related protein 44 (112 aa).

The first 39 residues, 1–39 (MATTIDQTSIKSLHFHQVIRLIITIIFLAFLFLIGPTSS), serve as a signal peptide directing secretion. The segment at 41 to 112 (NHHLHESSSK…VPSGPNPISN (72 aa)) is disordered. A compositionally biased stretch (polar residues) spans 62-71 (QPSTPSSSTM). 2 positions are modified to hydroxyproline: Pro104 and Pro107. O-linked (Ara...) hydroxyproline glycosylation occurs at Pro107.

The protein belongs to the CLV3/ESR signal peptide family. As to quaternary structure, interacts specifically with the leucine-rich repeat receptor-like protein kinase TDR, especially in the presence of SERK2. In terms of processing, the O-glycosylation (arabinosylation) of the hydroxyproline Pro-107 enhances binding affinity of the CLE44p peptide for its receptor. As to expression, mostly expressed in flowers and leaves. Widely expressed along the vascular strands. In roots and hypocotyls, present in endodermal cells as well as cells in the phloem and the adjacent pericycle.

Its subcellular location is the secreted. The protein localises to the extracellular space. Extracellular signal peptide that regulates cell fate. May act with TDR as a ligand-receptor pair in a signal transduction pathway that represses tracheary element differentiation but promotes the formation of procambial cells adjacent to phloem cells in the veins. Regulates the transition of protophloem cells from proliferation to differentiation, thus impinging on postembryonic growth capacity of the root meristem; this signaling pathway requires CRN and CLV2. This is CLAVATA3/ESR (CLE)-related protein 44 from Arabidopsis thaliana (Mouse-ear cress).